The following is a 1086-amino-acid chain: Tudor domain-containing protein 7 (1086 aa).

HTH OST-type domains follow at residues 3–76 (EADL…YAVA) and 222–291 (KMDE…YPAR). Basic and acidic residues predominate over residues 295–306 (PLKSDQDPEKEL). The interval 295-324 (PLKSDQDPEKELPPPPPAPKQEVPSQGSPA) is disordered. Positions 325–394 (VMPDVKEKVA…TQKAILYAKL (70 aa)) constitute an HTH OST-type 3 domain. Tudor domains follow at residues 501–558 (TVHV…FCSL) and 691–748 (LPFC…FLQE). The disordered stretch occupies residues 844-866 (AASSPGNRNGGTPAPGSPAESLR). A Phosphoserine modification is found at Ser-847. The interval 849-1086 (GNRNGGTPAP…QYLLELSKVN (238 aa)) is interaction with CDK17. Residues 881-1086 (TSSFSLEELP…QYLLELSKVN (206 aa)) form an interaction with CABLES1 region.

It belongs to the TDRD7 family. In terms of assembly, found in a mRNP complex, at least composed of TDRD1, TDRD6, TDRD7 and DDX4. Found in a complex containing CABLES1, CDK16 and CDK17. Interacts with CABLES1, CDK17 and PIWIL1. As to expression, mainly expressed in testis. Expressed in spermatogonia, spermatocytes and round spermatids (at protein level). Also expressed in the developing lens.

It localises to the cytoplasm. Component of specific cytoplasmic RNA granules involved in post-transcriptional regulation of specific genes: probably acts by binding to specific mRNAs and regulating their translation. Required for lens transparency during lens development, by regulating translation of genes such as CRYBB3 and HSPB1 in the developing lens. Also required during spermatogenesis. The protein is Tudor domain-containing protein 7 (Tdrd7) of Mus musculus (Mouse).